Here is a 265-residue protein sequence, read N- to C-terminus: MQRYKVTLMYDGTNFAGFQRQPNKRTVESTLTDVVNKMAKQPDPAIVIYGSGRTDAGVHALAQVVHFDFPFLIPADNMRKGLNSMLPMDMEVLKVEEVAPTFHARYDVSGKQYQYRMDMGEFRNPFKRNYTGHWKFPVDLAKINVALADLVGEHDYTSFVASGAQTRTFVRTIYEATCHIDEANHELVFEFYGNGFMYNQVRIMVGVLVEIGSGTRPVHDVLRLYEVKDRKQARRTVPAAGLYLKHVYYQGEDPQHPTKLPQHQR.

Asp55 serves as the catalytic Nucleophile. Residue Tyr113 participates in substrate binding.

The protein belongs to the tRNA pseudouridine synthase TruA family. As to quaternary structure, homodimer.

It carries out the reaction uridine(38/39/40) in tRNA = pseudouridine(38/39/40) in tRNA. In terms of biological role, formation of pseudouridine at positions 38, 39 and 40 in the anticodon stem and loop of transfer RNAs. This Levilactobacillus brevis (strain ATCC 367 / BCRC 12310 / CIP 105137 / JCM 1170 / LMG 11437 / NCIMB 947 / NCTC 947) (Lactobacillus brevis) protein is tRNA pseudouridine synthase A.